Consider the following 181-residue polypeptide: GTP cyclohydrolase 1 2 (181 aa).

It belongs to the GTP cyclohydrolase I family. Homomer.

The enzyme catalyses GTP + H2O = 7,8-dihydroneopterin 3'-triphosphate + formate + H(+). The protein operates within cofactor biosynthesis; 7,8-dihydroneopterin triphosphate biosynthesis; 7,8-dihydroneopterin triphosphate from GTP: step 1/1. This chain is GTP cyclohydrolase 1 2, found in Pseudomonas syringae pv. tomato (strain ATCC BAA-871 / DC3000).